Consider the following 137-residue polypeptide: Dormancy-associated protein homolog 3 (137 aa).

2 disordered regions span residues 1-55 and 69-137; these read MGLL…DSLP and KPPG…TYGM. Over residues 32-43 the composition is skewed to polar residues; sequence FRPSSGNDQSEA. Positions 70 to 87 are enriched in low complexity; the sequence is PPGYQGSSAPASPAGSTP. Serine 81 is modified (phosphoserine). Residues 88 to 97 show a composition bias toward pro residues; the sequence is PLSPFSPPLS. Over residues 104-118 the composition is skewed to basic and acidic residues; it reads EPFRFRRRSTSDAFE. The segment covering 127–137 has biased composition (polar residues); it reads GPRSSPPTYGM.

This sequence belongs to the DRM1/ARP family.

The protein is Dormancy-associated protein homolog 3 of Arabidopsis thaliana (Mouse-ear cress).